Here is a 252-residue protein sequence, read N- to C-terminus: Triosephosphate isomerase (252 aa).

10–12 (NWK) is a substrate binding site. The Electrophile role is filled by histidine 96. The Proton acceptor role is filled by glutamate 168. Substrate-binding positions include glycine 174, serine 214, and 235 to 236 (GG).

Belongs to the triosephosphate isomerase family. Homodimer.

The protein resides in the cytoplasm. The catalysed reaction is D-glyceraldehyde 3-phosphate = dihydroxyacetone phosphate. It functions in the pathway carbohydrate biosynthesis; gluconeogenesis. It participates in carbohydrate degradation; glycolysis; D-glyceraldehyde 3-phosphate from glycerone phosphate: step 1/1. Functionally, involved in the gluconeogenesis. Catalyzes stereospecifically the conversion of dihydroxyacetone phosphate (DHAP) to D-glyceraldehyde-3-phosphate (G3P). The protein is Triosephosphate isomerase of Streptococcus pyogenes serotype M1.